We begin with the raw amino-acid sequence, 126 residues long: S-adenosylmethionine decarboxylase proenzyme (126 aa).

S63 functions as the Schiff-base intermediate with substrate; via pyruvic acid in the catalytic mechanism. Residue S63 is modified to Pyruvic acid (Ser); by autocatalysis. The active-site Proton acceptor; for processing activity is the H68. Catalysis depends on C83, which acts as the Proton donor; for catalytic activity.

The protein belongs to the prokaryotic AdoMetDC family. Type 1 subfamily. Heterotetramer of two alpha and two beta chains arranged as a dimer of alpha/beta heterodimers. Requires pyruvate as cofactor. Post-translationally, is synthesized initially as an inactive proenzyme. Formation of the active enzyme involves a self-maturation process in which the active site pyruvoyl group is generated from an internal serine residue via an autocatalytic post-translational modification. Two non-identical subunits are generated from the proenzyme in this reaction, and the pyruvate is formed at the N-terminus of the alpha chain, which is derived from the carboxyl end of the proenzyme. The post-translation cleavage follows an unusual pathway, termed non-hydrolytic serinolysis, in which the side chain hydroxyl group of the serine supplies its oxygen atom to form the C-terminus of the beta chain, while the remainder of the serine residue undergoes an oxidative deamination to produce ammonia and the pyruvoyl group blocking the N-terminus of the alpha chain.

The enzyme catalyses S-adenosyl-L-methionine + H(+) = S-adenosyl 3-(methylsulfanyl)propylamine + CO2. The protein operates within amine and polyamine biosynthesis; S-adenosylmethioninamine biosynthesis; S-adenosylmethioninamine from S-adenosyl-L-methionine: step 1/1. In terms of biological role, catalyzes the decarboxylation of S-adenosylmethionine to S-adenosylmethioninamine (dcAdoMet), the propylamine donor required for the synthesis of the polyamines spermine and spermidine from the diamine putrescine. This Bacillus velezensis (strain DSM 23117 / BGSC 10A6 / LMG 26770 / FZB42) (Bacillus amyloliquefaciens subsp. plantarum) protein is S-adenosylmethionine decarboxylase proenzyme.